Here is a 242-residue protein sequence, read N- to C-terminus: Ribonuclease PH (242 aa).

Phosphate is bound by residues Arg89 and 127-129 (GTR).

This sequence belongs to the RNase PH family. Homohexameric ring arranged as a trimer of dimers.

The catalysed reaction is tRNA(n+1) + phosphate = tRNA(n) + a ribonucleoside 5'-diphosphate. Functionally, phosphorolytic 3'-5' exoribonuclease that plays an important role in tRNA 3'-end maturation. Removes nucleotide residues following the 3'-CCA terminus of tRNAs; can also add nucleotides to the ends of RNA molecules by using nucleoside diphosphates as substrates, but this may not be physiologically important. Probably plays a role in initiation of 16S rRNA degradation (leading to ribosome degradation) during starvation. This is Ribonuclease PH from Neisseria gonorrhoeae (strain ATCC 700825 / FA 1090).